The primary structure comprises 344 residues: MVCARHQPGGLCLLLLLLCQFMEDRSAQAGNCWLRQAKNGRCQVLYKTELSKEECCSTGRLSTSWTEEDVNDNTLFKWMIFNGGAPNCIPCKETCENVDCGPGKKCRMNKKNKPRCVCAPDCSNITWKGPVCGLDGKTYRNECALLKARCKEQPELEVQYQGKCKKTCRDVFCPGSSTCVVDQTNNAYCVTCNRICPEPSSSEQYLCGNDGVTYSSACHLRKATCLLGRSIGLAYEGKCIKAKSCEDIQCGGGKKCLWDSKVGRGRCSLCDELCPDSKSDEPVCASDNATYASECAMKEAACSSGVLLEVKHSGSCNSISEETEEEEEEEDQDYSFPISSILEW.

The signal sequence occupies residues 1 to 29 (MVCARHQPGGLCLLLLLLCQFMEDRSAQA). Residues 30-103 (GNCWLRQAKN…TCENVDCGPG (74 aa)) enclose the TB domain. Intrachain disulfides connect Cys32-Cys55, Cys42-Cys88, Cys56-Cys91, Cys95-Cys106, Cys100-Cys116, Cys118-Cys150, Cys122-Cys143, Cys132-Cys164, Cys168-Cys179, Cys173-Cys189, Cys192-Cys225, Cys196-Cys218, Cys207-Cys239, Cys245-Cys256, Cys250-Cys267, Cys270-Cys302, Cys274-Cys295, and Cys284-Cys316. In terms of domain architecture, Follistatin-like 1 spans 94–117 (TCENVDCGPGKKCRMNKKNKPRCV). Residues 112–166 (NKPRCVCAPDCSNITWKGPVCGLDGKTYRNECALLKARCKEQPELEVQYQGKCKK) enclose the Kazal-like 1 domain. The N-linked (GlcNAc...) asparagine glycan is linked to Asn124. Positions 167-190 (TCRDVFCPGSSTCVVDQTNNAYCV) constitute a Follistatin-like 2 domain. In terms of domain architecture, Kazal-like 2 spans 186–241 (NAYCVTCNRICPEPSSSEQYLCGNDGVTYSSACHLRKATCLLGRSIGLAYEGKCIK). In terms of domain architecture, Follistatin-like 3 spans 244–268 (SCEDIQCGGGKKCLWDSKVGRGRCS). The region spanning 264–318 (RGRCSLCDELCPDSKSDEPVCASDNATYASECAMKEAACSSGVLLEVKHSGSCNS) is the Kazal-like 3 domain. N-linked (GlcNAc...) asparagine glycosylation occurs at Asn288. The interval 315–344 (SCNSISEETEEEEEEEDQDYSFPISSILEW) is disordered. Acidic residues predominate over residues 321–333 (EETEEEEEEEDQD).

In terms of assembly, interacts with GDF11. Interacts with activin A/INHBA. Interacts with myostatin/MSTN.

The protein resides in the secreted. The protein localises to the nucleus. It is found in the nucleolus. In terms of biological role, multifunctional regulatory protein whose primary function is to antagonize members of the transforming growth factor beta (TGF-beta) superfamily including activin, myostatin, GDF11 or bone morphogenetic proteins (BMPs). Mechanistically, binds to these ligands in the extracellular space, blocking their type II receptor-binding site to inhibit downstream signaling. Plays an essential role in muscle fiber formation and growth both by preventing the repressive effects of myostatin and through SMAD3/AKT/mTOR signaling independently of myostatin. Also promotes neural differentiation by antagonizing the action BMP4. Acts as a specific inhibitor of the biosynthesis and secretion of pituitary follicle stimulating hormone (FSH) by sequestering activin A/INHBA. On the other hand, translocates into the nucleus where it down-regulates rRNA synthesis and ribosome biogenesis to maintain cellular energy homeostasis by binding to rDNA. The chain is Follistatin from Mus musculus (Mouse).